Consider the following 326-residue polypeptide: tRNA-dihydrouridine(20/20a) synthase (326 aa).

Residues 11–13 and Gln-63 each bind FMN; that span reads PML. Catalysis depends on Cys-93, which acts as the Proton donor. Residues Lys-132, His-165, 205 to 207, and 227 to 228 each bind FMN; these read NGG and GR.

Belongs to the Dus family. DusA subfamily. It depends on FMN as a cofactor.

It catalyses the reaction 5,6-dihydrouridine(20) in tRNA + NADP(+) = uridine(20) in tRNA + NADPH + H(+). It carries out the reaction 5,6-dihydrouridine(20) in tRNA + NAD(+) = uridine(20) in tRNA + NADH + H(+). The enzyme catalyses 5,6-dihydrouridine(20a) in tRNA + NADP(+) = uridine(20a) in tRNA + NADPH + H(+). The catalysed reaction is 5,6-dihydrouridine(20a) in tRNA + NAD(+) = uridine(20a) in tRNA + NADH + H(+). Catalyzes the synthesis of 5,6-dihydrouridine (D), a modified base found in the D-loop of most tRNAs, via the reduction of the C5-C6 double bond in target uridines. Specifically modifies U20 and U20a in tRNAs. This chain is tRNA-dihydrouridine(20/20a) synthase, found in Vibrio parahaemolyticus serotype O3:K6 (strain RIMD 2210633).